The primary structure comprises 419 residues: S-adenosylmethionine synthase (419 aa).

H14 provides a ligand contact to ATP. Residue D16 participates in Mg(2+) binding. A K(+)-binding site is contributed by E42. 2 residues coordinate L-methionine: E55 and Q98. The interval 98–108 (QSQDIYQGVDR) is flexible loop. ATP-binding positions include 164–166 (DSK), 242–243 (KF), D251, 257–258 (RK), A274, and K278. D251 provides a ligand contact to L-methionine. K282 provides a ligand contact to L-methionine.

The protein belongs to the AdoMet synthase family. In terms of assembly, homotetramer; dimer of dimers. Mg(2+) serves as cofactor. Requires K(+) as cofactor.

It is found in the cytoplasm. It carries out the reaction L-methionine + ATP + H2O = S-adenosyl-L-methionine + phosphate + diphosphate. It participates in amino-acid biosynthesis; S-adenosyl-L-methionine biosynthesis; S-adenosyl-L-methionine from L-methionine: step 1/1. Catalyzes the formation of S-adenosylmethionine (AdoMet) from methionine and ATP. The overall synthetic reaction is composed of two sequential steps, AdoMet formation and the subsequent tripolyphosphate hydrolysis which occurs prior to release of AdoMet from the enzyme. The chain is S-adenosylmethionine synthase from Christiangramia forsetii (strain DSM 17595 / CGMCC 1.15422 / KT0803) (Gramella forsetii).